A 170-amino-acid polypeptide reads, in one-letter code: Interferon gamma (170 aa).

The first 20 residues, 1–20 (MNSRLCIMALLLCFSQALLG), serve as a signal peptide directing secretion. N-linked (GlcNAc...) asparagine glycans are attached at residues asparagine 36 and asparagine 103.

Belongs to the type II (or gamma) interferon family. As to quaternary structure, homodimer. Interacts with IFNGR1 (via extracellular domain); this interaction promotes IFNGR1 dimerization. Released primarily from activated T lymphocytes.

Its subcellular location is the secreted. Its function is as follows. Type II interferon produced by immune cells such as T-cells and NK cells that plays crucial roles in antimicrobial, antiviral, and antitumor responses by activating effector immune cells and enhancing antigen presentation. Primarily signals through the JAK-STAT pathway after interaction with its receptor IFNGR1 to affect gene regulation. Upon IFNG binding, IFNGR1 intracellular domain opens out to allow association of downstream signaling components JAK2, JAK1 and STAT1, leading to STAT1 activation, nuclear translocation and transcription of IFNG-regulated genes. Many of the induced genes are transcription factors such as IRF1 that are able to further drive regulation of a next wave of transcription. Plays a role in class I antigen presentation pathway by inducing a replacement of catalytic proteasome subunits with immunoproteasome subunits. In turn, increases the quantity, quality, and repertoire of peptides for class I MHC loading. Increases the efficiency of peptide generation also by inducing the expression of activator PA28 that associates with the proteasome and alters its proteolytic cleavage preference. Up-regulates as well MHC II complexes on the cell surface by promoting expression of several key molecules such as cathepsins B/CTSB, H/CTSH, and L/CTSL. Participates in the regulation of hematopoietic stem cells during development and under homeostatic conditions by affecting their development, quiescence, and differentiation. This is Interferon gamma (IFNG) from Sigmodon hispidus (Hispid cotton rat).